The chain runs to 396 residues: S-adenosylmethionine synthase (396 aa).

His-16 is a binding site for ATP. Asp-18 provides a ligand contact to Mg(2+). Glu-44 lines the K(+) pocket. L-methionine-binding residues include Glu-57 and Gln-100. The tract at residues 100-110 is flexible loop; the sequence is QSPDIAQGVDR. ATP is bound by residues 167-169, 232-233, Asp-241, 247-248, Ala-264, and Lys-268; these read DAK, RF, and RK. Asp-241 serves as a coordination point for L-methionine. Lys-272 serves as a coordination point for L-methionine.

The protein belongs to the AdoMet synthase family. In terms of assembly, homotetramer; dimer of dimers. Requires Mg(2+) as cofactor. K(+) is required as a cofactor.

It is found in the cytoplasm. The catalysed reaction is L-methionine + ATP + H2O = S-adenosyl-L-methionine + phosphate + diphosphate. It participates in amino-acid biosynthesis; S-adenosyl-L-methionine biosynthesis; S-adenosyl-L-methionine from L-methionine: step 1/1. Catalyzes the formation of S-adenosylmethionine (AdoMet) from methionine and ATP. The overall synthetic reaction is composed of two sequential steps, AdoMet formation and the subsequent tripolyphosphate hydrolysis which occurs prior to release of AdoMet from the enzyme. The protein is S-adenosylmethionine synthase of Ralstonia nicotianae (strain ATCC BAA-1114 / GMI1000) (Ralstonia solanacearum).